The following is a 141-amino-acid chain: HTH-type transcriptional regulator MntR (141 aa).

Residues 1–63 form the HTH dtxR-type domain; that stretch reads MPTPSMEDYI…YEKYRGLVLT (63 aa). Mn(2+)-binding residues include Asp-8, Glu-11, His-77, Glu-99, Glu-102, and His-103.

This sequence belongs to the DtxR/MntR family. In terms of assembly, homodimer.

It localises to the cytoplasm. DNA binding is strongly activated by Mn(2+). Central regulator of manganese homeostasis. The sequence is that of HTH-type transcriptional regulator MntR from Geobacillus kaustophilus (strain HTA426).